The following is a 323-amino-acid chain: MKKEELRLIFMGTADFAVPALRALVENGYQVKAVVTMPDKPMGRGHKVSPSMVKLYAQELGLPILQPDNLNEESFLDELRTYQPHLQIVVAFRMLPRSVWQMPPMGTINLHGSLLPMYRGAAPINHAIRHGDTETGVTTFRLRHEIDTGEVLLQEKLPIGHEETFGELYERMATLGASVLVHTVDLFLEGEPVSIPQEQLPGYVGARPAPKIFKDDCRIDWDKPAEEVHNFIRSISPAPTAWTKLHRPGMESIVLKIYRTQVIEREPRHRGRFGSIIWDKKNLDVMTRKGVIRILSLQMPGKKQMDAASFLNGFALSSDMYIE.

Residue 113–116 participates in (6S)-5,6,7,8-tetrahydrofolate binding; sequence SLLP.

The protein belongs to the Fmt family.

The catalysed reaction is L-methionyl-tRNA(fMet) + (6R)-10-formyltetrahydrofolate = N-formyl-L-methionyl-tRNA(fMet) + (6S)-5,6,7,8-tetrahydrofolate + H(+). In terms of biological role, attaches a formyl group to the free amino group of methionyl-tRNA(fMet). The formyl group appears to play a dual role in the initiator identity of N-formylmethionyl-tRNA by promoting its recognition by IF2 and preventing the misappropriation of this tRNA by the elongation apparatus. The protein is Methionyl-tRNA formyltransferase of Porphyromonas gingivalis (strain ATCC 33277 / DSM 20709 / CIP 103683 / JCM 12257 / NCTC 11834 / 2561).